The following is a 211-amino-acid chain: Pyridoxine/pyridoxamine 5'-phosphate oxidase (211 aa).

Substrate-binding positions include 7-10 and Lys-65; that span reads RREY. Residues 60–65, 75–76, Arg-81, Lys-82, and Gln-104 each bind FMN; these read RIVLLK and YT. Tyr-122, Arg-126, and Ser-130 together coordinate substrate. FMN contacts are provided by residues 139–140 and Trp-184; that span reads QS. 190–192 contacts substrate; it reads RLH. Arg-194 is an FMN binding site.

Belongs to the pyridoxamine 5'-phosphate oxidase family. Homodimer. The cofactor is FMN.

It carries out the reaction pyridoxamine 5'-phosphate + O2 + H2O = pyridoxal 5'-phosphate + H2O2 + NH4(+). It catalyses the reaction pyridoxine 5'-phosphate + O2 = pyridoxal 5'-phosphate + H2O2. It participates in cofactor metabolism; pyridoxal 5'-phosphate salvage; pyridoxal 5'-phosphate from pyridoxamine 5'-phosphate: step 1/1. Its pathway is cofactor metabolism; pyridoxal 5'-phosphate salvage; pyridoxal 5'-phosphate from pyridoxine 5'-phosphate: step 1/1. In terms of biological role, catalyzes the oxidation of either pyridoxine 5'-phosphate (PNP) or pyridoxamine 5'-phosphate (PMP) into pyridoxal 5'-phosphate (PLP). In Vibrio vulnificus (strain CMCP6), this protein is Pyridoxine/pyridoxamine 5'-phosphate oxidase.